The primary structure comprises 97 residues: Putative pterin-4-alpha-carbinolamine dehydratase (97 aa).

The protein belongs to the pterin-4-alpha-carbinolamine dehydratase family.

The enzyme catalyses (4aS,6R)-4a-hydroxy-L-erythro-5,6,7,8-tetrahydrobiopterin = (6R)-L-erythro-6,7-dihydrobiopterin + H2O. This chain is Putative pterin-4-alpha-carbinolamine dehydratase, found in Phenylobacterium zucineum (strain HLK1).